Here is a 158-residue protein sequence, read N- to C-terminus: Putative metalloproteinase inhibitor tag-225 (158 aa).

An N-terminal signal peptide occupies residues 1–20; it reads MQNLSLSLVILSVLIAVTLA. Residue C21 participates in Zn(2+) binding. The tract at residues 21–25 is involved in metalloproteinase-binding; it reads CKCRE. 3 disulfide bridges follow: C21–C96, C23–C123, and C33–C158. In terms of domain architecture, NTR spans 21–158; sequence CKCREQSTKE…LQSQVKSIKC (138 aa). Residue N79 is glycosylated (N-linked (GlcNAc...) asparagine). The segment at 93 to 94 is involved in metalloproteinase-binding; sequence AP.

This sequence belongs to the protease inhibitor I35 (TIMP) family.

The protein resides in the secreted. Complexes with metalloproteinases and irreversibly inactivates them by binding to their catalytic zinc cofactor. This Caenorhabditis elegans protein is Putative metalloproteinase inhibitor tag-225 (tag-225).